Here is a 614-residue protein sequence, read N- to C-terminus: Fructokinase-like 2, chloroplastic (614 aa).

The transit peptide at 1 to 44 (MASLSFTQFLSFPRCNADVPCLLQSHGFVKFRGERWNGKQSFSM) directs the protein to the chloroplast. 2 disordered regions span residues 47 to 75 (GRRKLSESAPLEEEGNDGNGAVVGKKPSK) and 542 to 592 (GYPP…YVMK). Residues 548 to 563 (DMEEEEDDEEEDEVES) are compositionally biased toward acidic residues. Basic and acidic residues predominate over residues 571–583 (ITEKEYRTSKPYD).

This sequence belongs to the carbohydrate kinase PfkB family. Interacts with CITRX/TRXz. Binds to FLN1 and PTAC5. Associates with the plastid-encoded RNA polymerase (PEP) complex.

The protein resides in the plastid. Its subcellular location is the chloroplast. Functionally, required for proper chloroplast development, most likely through regulating plastid-encoded polymerase (PEP) dependent chloroplast transcription. Acts as a component of the transcriptionally active plastid chromosome that is required for plastid gene expression. This is Fructokinase-like 2, chloroplastic from Arabidopsis thaliana (Mouse-ear cress).